A 162-amino-acid polypeptide reads, in one-letter code: NADH-quinone oxidoreductase subunit I (162 aa).

2 consecutive 4Fe-4S ferredoxin-type domains span residues 53–83 (LRRY…IDSA) and 93–122 (TRYD…ETHI). 8 residues coordinate [4Fe-4S] cluster: Cys-63, Cys-66, Cys-69, Cys-73, Cys-102, Cys-105, Cys-108, and Cys-112.

Belongs to the complex I 23 kDa subunit family. As to quaternary structure, NDH-1 is composed of 14 different subunits. Subunits NuoA, H, J, K, L, M, N constitute the membrane sector of the complex. It depends on [4Fe-4S] cluster as a cofactor.

The protein resides in the cell inner membrane. The catalysed reaction is a quinone + NADH + 5 H(+)(in) = a quinol + NAD(+) + 4 H(+)(out). In terms of biological role, NDH-1 shuttles electrons from NADH, via FMN and iron-sulfur (Fe-S) centers, to quinones in the respiratory chain. The immediate electron acceptor for the enzyme in this species is believed to be ubiquinone. Couples the redox reaction to proton translocation (for every two electrons transferred, four hydrogen ions are translocated across the cytoplasmic membrane), and thus conserves the redox energy in a proton gradient. The protein is NADH-quinone oxidoreductase subunit I of Xanthomonas axonopodis pv. citri (strain 306).